Here is a 489-residue protein sequence, read N- to C-terminus: MLLISRIGARHIRKKPLHVENHYRSFTKFDSFGNSPIPASKQRFVPTSGTYPKGFLVGSTNVGIKPDGLSQPDLILVASEKKWETCGAAVLTKNEFPAASVVVTRDLLKKSKGRGLRGVVANSWCANLLTGEKGLEDSRNMSREAGRIVSGEGTGQGEESVMVMHTGMGGQRLRIDNIIQGFPNLQQEMGTTHDHWIEAARGICTTDTFPKLASRTFTLPSSPETTFSIAGITKGAGMIHPNMATTLGIICTDAPITPPALQQLLSTAADKSYNCISIEGDTSTNDMVAMLANGAAAPNNAHFPVDFDSSAESQSEDFIAFQRMLIEFMADLAKLVVRDGEGATKFITIRVRGAPTYPAGKHIASVIARSVLFKTGVYGKDPNPIGVLAALGYSLMGTEFAGKGIINPESTSVSFMPVDGTDELNFVKKGRLVKVDEVRAKKLMEEEDVEVIVDLRDDGRKWREDDEEAVYWTCDITHEFVTINGDFGN.

The transit peptide at 1–11 (MLLISRIGARH) directs the protein to the mitochondrion. T205, K234, T245, E341, and N484 together coordinate substrate. The active-site Nucleophile is T245.

It belongs to the ArgJ family. Heterodimer of an alpha and a beta chain. In terms of processing, the alpha and beta chains are autoproteolytically processed from a single precursor protein within the mitochondrion.

The protein localises to the mitochondrion matrix. It catalyses the reaction N(2)-acetyl-L-ornithine + L-glutamate = N-acetyl-L-glutamate + L-ornithine. It carries out the reaction L-glutamate + acetyl-CoA = N-acetyl-L-glutamate + CoA + H(+). The protein operates within amino-acid biosynthesis; L-arginine biosynthesis; L-ornithine and N-acetyl-L-glutamate from L-glutamate and N(2)-acetyl-L-ornithine (cyclic): step 1/1. It participates in amino-acid biosynthesis; L-arginine biosynthesis; N(2)-acetyl-L-ornithine from L-glutamate: step 1/4. Its function is as follows. Catalyzes two activities which are involved in the cyclic version of arginine biosynthesis: the synthesis of acetylglutamate from glutamate and acetyl-CoA, and of ornithine by transacetylation between acetylornithine and glutamate. The protein is Arginine biosynthesis bifunctional protein ArgJ 2, mitochondrial of Sclerotinia sclerotiorum (strain ATCC 18683 / 1980 / Ss-1) (White mold).